Here is a 60-residue protein sequence, read N- to C-terminus: Defensin-like protein 4 (60 aa).

4 disulfides stabilise this stretch: Cys4/Cys56, Cys17/Cys41, Cys26/Cys51, and Cys30/Cys53.

It belongs to the DEFL family. Protease inhibitor I18 (RTI/MTI-2) subfamily.

Its subcellular location is the secreted. In terms of biological role, inhibits trypsin and chymotrypsin. The protein is Defensin-like protein 4 of Brassica napus (Rape).